Reading from the N-terminus, the 477-residue chain is Histidine permease HisP (477 aa).

12 consecutive transmembrane segments (helical) span residues 16–36, 40–60, 86–106, 126–146, 156–176, 192–212, 238–258, 284–304, 337–359, 364–386, 408–428, and 437–457; these read ITMI…SGAT, AGPW…YFVM, PAFG…TIAV, IFSG…VGAF, IKVI…FGVL, HGFV…GFSF, SIFW…AAII, IGFA…VISS, IPFY…GIFG, LFLI…VSHI, WFPF…INLD, and WGEG…YFGY.

It belongs to the amino acid-polyamine-organocation (APC) superfamily. Amino acid transporter (AAT) (TC 2.A.3.1) family.

The protein localises to the cell membrane. Involved in histidine uptake. Has low affinity for arginine and lysine. Plays no significant role in the excretion of accumulated histidine. The chain is Histidine permease HisP from Lactococcus lactis subsp. cremoris (strain MG1363).